Here is a 425-residue protein sequence, read N- to C-terminus: Probable mitochondrial import inner membrane translocase subunit tin-44 (425 aa).

Positions 38-149 (FLNNLIDNVR…EHVEKVAEKV (112 aa)) form a coiled coil.

It belongs to the Tim44 family. In terms of assembly, probable component of the PAM complex at least composed of a mitochondrial HSP70 protein, GrpE, tin-44, tim-16 and tim-14/dnj-21. The complex interacts with the tim-23 component of the TIM23 complex.

It is found in the mitochondrion inner membrane. Its function is as follows. Essential component of the PAM complex, a complex required for the translocation of transit peptide-containing proteins from the inner membrane into the mitochondrial matrix in an ATP-dependent manner. Recruits mitochondrial HSP70 to drive protein translocation into the matrix using ATP as an energy source. This Caenorhabditis elegans protein is Probable mitochondrial import inner membrane translocase subunit tin-44.